Here is a 2381-residue protein sequence, read N- to C-terminus: Protein Ycf2 (2381 aa).

Residue 1655 to 1662 (GPMETGRS) participates in ATP binding.

Belongs to the Ycf2 family.

Its subcellular location is the plastid. The protein resides in the chloroplast stroma. In terms of biological role, probable ATPase of unknown function. Its presence in a non-photosynthetic plant (Epifagus virginiana) and experiments in tobacco indicate that it has an essential function which is probably not related to photosynthesis. This chain is Protein Ycf2, found in Angiopteris evecta (Mule's foot fern).